The chain runs to 547 residues: Delta-guaiene synthase 2 (547 aa).

Mg(2+)-binding residues include Asp-299, Asp-303, and Asp-444. Residues 299–303 (DDTYD) carry the DDXXD motif motif.

This sequence belongs to the terpene synthase family. It depends on Mg(2+) as a cofactor.

It carries out the reaction (2E,6E)-farnesyl diphosphate = delta-guaiene + diphosphate. The enzyme catalyses (2E,6E)-farnesyl diphosphate = alpha-guaiene + diphosphate. It functions in the pathway secondary metabolite biosynthesis; terpenoid biosynthesis. Functionally, sesquiterpene synthase involved in the biosynthesis of delta-guaiene (53.7%) and alpha-guaiene (44.6%), two structures composed of five- and seven-membered rings. Also produces 1.7% of alpha-humulene. In Aquilaria crassna (Eagle wood), this protein is Delta-guaiene synthase 2 (C3).